The sequence spans 187 residues: Elongation factor P (187 aa).

It belongs to the elongation factor P family.

It is found in the cytoplasm. It participates in protein biosynthesis; polypeptide chain elongation. Involved in peptide bond synthesis. Stimulates efficient translation and peptide-bond synthesis on native or reconstituted 70S ribosomes in vitro. Probably functions indirectly by altering the affinity of the ribosome for aminoacyl-tRNA, thus increasing their reactivity as acceptors for peptidyl transferase. This Corynebacterium jeikeium (strain K411) protein is Elongation factor P.